Reading from the N-terminus, the 118-residue chain is Large ribosomal subunit protein bL20 (118 aa).

This sequence belongs to the bacterial ribosomal protein bL20 family.

In terms of biological role, binds directly to 23S ribosomal RNA and is necessary for the in vitro assembly process of the 50S ribosomal subunit. It is not involved in the protein synthesizing functions of that subunit. The protein is Large ribosomal subunit protein bL20 of Pseudomonas entomophila (strain L48).